Reading from the N-terminus, the 132-residue chain is Fatty acid-binding protein, brain (132 aa).

The residue at position 2 (Val-2) is an N-acetylvaline. Residue 127–129 coordinates a fatty acid; that stretch reads RHY.

Belongs to the calycin superfamily. Fatty-acid binding protein (FABP) family. As to quaternary structure, monomer.

The protein resides in the cytoplasm. Functionally, FABPs are thought to play a role in the intracellular transport of long-chain fatty acids and their acyl-CoA esters. Binds oleic and palmitic acids but not palmitoyl CoA. This Bos taurus (Bovine) protein is Fatty acid-binding protein, brain (FABP7).